The sequence spans 83 residues: uncharacterized protein (83 aa).

Residues 24-44 traverse the membrane as a helical segment; the sequence is AMTLLIITNTLLIILSYSVLL.

It localises to the host membrane. This is an uncharacterized protein from Acidianus sp. F28 (AFV-2).